A 360-amino-acid polypeptide reads, in one-letter code: DNA replication and repair protein RecF (360 aa).

30 to 37 (GHNGSGKT) contributes to the ATP binding site.

It belongs to the RecF family.

It localises to the cytoplasm. Functionally, the RecF protein is involved in DNA metabolism; it is required for DNA replication and normal SOS inducibility. RecF binds preferentially to single-stranded, linear DNA. It also seems to bind ATP. The polypeptide is DNA replication and repair protein RecF (Actinobacillus pleuropneumoniae serotype 3 (strain JL03)).